The sequence spans 399 residues: PCI domain-containing protein 2 (399 aa).

The PCI domain maps to V210 to P391.

The protein belongs to the CSN12 family.

This Xenopus laevis (African clawed frog) protein is PCI domain-containing protein 2 (pcid2).